The following is a 577-amino-acid chain: Arginine--tRNA ligase (577 aa).

The 'HIGH' region signature appears at 122–132 (PNVAKEMHVGH).

The protein belongs to the class-I aminoacyl-tRNA synthetase family. In terms of assembly, monomer.

It is found in the cytoplasm. It catalyses the reaction tRNA(Arg) + L-arginine + ATP = L-arginyl-tRNA(Arg) + AMP + diphosphate. This Histophilus somni (strain 129Pt) (Haemophilus somnus) protein is Arginine--tRNA ligase.